The chain runs to 145 residues: 3-dehydroquinate dehydratase (145 aa).

Tyrosine 24 functions as the Proton acceptor in the catalytic mechanism. The substrate site is built by asparagine 75, histidine 81, and aspartate 88. Histidine 102 functions as the Proton donor in the catalytic mechanism. Residues 103–104 and arginine 113 each bind substrate; that span reads LS.

It belongs to the type-II 3-dehydroquinase family. Homododecamer.

The enzyme catalyses 3-dehydroquinate = 3-dehydroshikimate + H2O. It functions in the pathway metabolic intermediate biosynthesis; chorismate biosynthesis; chorismate from D-erythrose 4-phosphate and phosphoenolpyruvate: step 3/7. In terms of biological role, catalyzes a trans-dehydration via an enolate intermediate. The protein is 3-dehydroquinate dehydratase of Chelativorans sp. (strain BNC1).